We begin with the raw amino-acid sequence, 595 residues long: DNA ligase (595 aa).

NAD(+) is bound by residues 32–36 (DEKYD), 81–82 (SL), and Glu-113. Lys-115 (N6-AMP-lysine intermediate) is an active-site residue. Residues Arg-136, Glu-178, Lys-296, and Lys-320 each coordinate NAD(+). The Zn(2+) site is built by Cys-414, Cys-417, Cys-432, and Cys-438.

The protein belongs to the NAD-dependent DNA ligase family. LigA subfamily. Mg(2+) is required as a cofactor. The cofactor is Mn(2+).

The catalysed reaction is NAD(+) + (deoxyribonucleotide)n-3'-hydroxyl + 5'-phospho-(deoxyribonucleotide)m = (deoxyribonucleotide)n+m + AMP + beta-nicotinamide D-nucleotide.. DNA ligase that catalyzes the formation of phosphodiester linkages between 5'-phosphoryl and 3'-hydroxyl groups in double-stranded DNA using NAD as a coenzyme and as the energy source for the reaction. It is essential for DNA replication and repair of damaged DNA. This chain is DNA ligase, found in Blochmanniella pennsylvanica (strain BPEN).